Reading from the N-terminus, the 2431-residue chain is Histone-lysine N-methyltransferase trr (2431 aa).

Disordered stretches follow at residues leucine 34–proline 78, aspartate 135–glycine 201, alanine 213–proline 235, and glutamine 759–asparagine 789. A compositionally biased stretch (polar residues) spans tyrosine 142–phenylalanine 165. Composition is skewed to low complexity over residues alanine 171 to serine 183, serine 218 to proline 235, and alanine 767 to proline 787. Positions leucine 801–leucine 805 match the LXXLL motif 1 motif. Disordered stretches follow at residues proline 863–serine 895, valine 918–glutamine 973, histidine 1226–alanine 1292, threonine 1404–serine 1433, and glycine 1478–methionine 1500. Composition is skewed to low complexity over residues threonine 866–serine 895, glutamine 952–glutamine 970, and histidine 1226–asparagine 1241. A compositionally biased stretch (basic residues) spans arginine 1269–arginine 1281. The span at proline 1410–serine 1422 shows a compositional bias: low complexity. Residues serine 1423–serine 1433 are compositionally biased toward gly residues. Residue threonine 1486 is modified to Phosphothreonine. Phosphoserine occurs at positions 1488 and 1490. The LXXLL motif 2 motif lies at leucine 1652–leucine 1656. A disordered region spans residues glycine 1790 to threonine 1836. The segment covering valine 1794–alanine 1811 has biased composition (polar residues). Residues threonine 1895–valine 1935 form a C2HC pre-PHD-type zinc finger. The PHD-type zinc-finger motif lies at glutamine 1956–glycine 2003. Positions leucine 2060–leucine 2064 match the LXXLL motif 3 motif. The region spanning serine 2061–alanine 2121 is the FYR N-terminal domain. In terms of domain architecture, FYR C-terminal spans glycine 2122–tyrosine 2209. One can recognise an SET domain in the interval asparagine 2291 to lysine 2407. In terms of domain architecture, Post-SET spans histidine 2415 to asparagine 2431.

The protein belongs to the class V-like SAM-binding methyltransferase superfamily. Histone-lysine methyltransferase family. TRX/MLL subfamily. In terms of assembly, component of the MLL3/4 complex composed at least of the catalytic subunit trr, ash2, Rbbp5, Dpy-30L1, wds, hcf, ptip, Pa1, Utx, Lpt and Ncoa6. Interacts with nuclear receptor EcR in an ecdysone-dependent manner. Interacts with ash2; the interaction stabilizes trr. As to expression, widely expressed.

The protein resides in the nucleus. The protein localises to the chromosome. It catalyses the reaction L-lysyl(4)-[histone H3] + 3 S-adenosyl-L-methionine = N(6),N(6),N(6)-trimethyl-L-lysyl(4)-[histone H3] + 3 S-adenosyl-L-homocysteine + 3 H(+). In terms of biological role, histone methyltransferase that acts as a coactivator for the ecdysone receptor during development. Specifically trimethylates 'Lys-4' of histone H3, a specific tag for epigenetic transcriptional activation. Recruited by EcR in an ecdysone-dependent manner causing H3 'Lys-4' trimethylation at ecdysone-inducible promoters, leading to activate expression. Plays a central role in the developing compound eye, during the progression of the morphogenetic furrow and in post-furrow differentiation of the retinal epithelium, notably by activating expression of hh. Also required for wing and abdominal development. In Drosophila melanogaster (Fruit fly), this protein is Histone-lysine N-methyltransferase trr (trr).